A 260-amino-acid chain; its full sequence is Neuraminyllactose-binding hemagglutinin (260 aa).

An N-terminal signal peptide occupies residues 1–27; the sequence is MRANNHFKDFAWKKCLLGASVVALLVG. Cys-28 carries the N-palmitoyl cysteine lipid modification. Cys-28 is lipidated: S-diacylglycerol cysteine. Positions 134–139 are N-acetyl-neuraminyl-alpha(2,3)-lactose binding motif; that stretch reads KRTIQK.

Its subcellular location is the cell outer membrane. The sequence is that of Neuraminyllactose-binding hemagglutinin (hpaA) from Helicobacter pylori (Campylobacter pylori).